A 61-amino-acid polypeptide reads, in one-letter code: MAKVSMINKSQRTPKFKVRQHNRCPVCGRPKAFYRKFQMCRICLRKYASAGQIPGVIKSSW.

4 residues coordinate Zn(2+): Cys24, Cys27, Cys40, and Cys43.

It belongs to the universal ribosomal protein uS14 family. Zinc-binding uS14 subfamily. As to quaternary structure, part of the 30S ribosomal subunit. Contacts proteins S3 and S10. The cofactor is Zn(2+).

Its function is as follows. Binds 16S rRNA, required for the assembly of 30S particles and may also be responsible for determining the conformation of the 16S rRNA at the A site. In Trichlorobacter lovleyi (strain ATCC BAA-1151 / DSM 17278 / SZ) (Geobacter lovleyi), this protein is Small ribosomal subunit protein uS14.